A 329-amino-acid polypeptide reads, in one-letter code: L-lactate dehydrogenase (329 aa).

Residues V18, E39, K46, Y71, and G85–A86 each bind NAD(+). Substrate contacts are provided by Q88 and R94. Residues S107, A124–N126, and S149 each bind NAD(+). A substrate-binding site is contributed by N126–D129. D154–R157 lines the substrate pocket. Positions 159 and 174 each coordinate beta-D-fructose 1,6-bisphosphate. The active-site Proton acceptor is the H181. Y226 is subject to Phosphotyrosine. T235 serves as a coordination point for substrate.

Belongs to the LDH/MDH superfamily. LDH family. In terms of assembly, homotetramer.

It localises to the cytoplasm. The catalysed reaction is (S)-lactate + NAD(+) = pyruvate + NADH + H(+). The protein operates within fermentation; pyruvate fermentation to lactate; (S)-lactate from pyruvate: step 1/1. Allosterically activated by fructose 1,6-bisphosphate (FBP). Catalyzes the conversion of lactate to pyruvate. This Streptococcus equinus (Streptococcus bovis) protein is L-lactate dehydrogenase.